A 214-amino-acid polypeptide reads, in one-letter code: Non-structural protein NP-1 (214 aa).

Disordered regions lie at residues 1–87 and 192–214; these read MSSE…TNPY and ESEEVTDEEMLSAVESMDTNASN. Positions 33 to 43 are enriched in basic residues; it reads SRSRSPIRRHG. The span at 44–55 shows a compositional bias: basic and acidic residues; the sequence is EKNLEYAHHSNQ. Over residues 56–71 the composition is skewed to polar residues; sequence ENRQSSYTALKTSDQA. Acidic residues predominate over residues 192 to 201; that stretch reads ESEEVTDEEM.

The protein belongs to the Bocaparvovirus Non-structural protein NP-1 family.

It is found in the host nucleus. Functionally, required for the expression of the capsid proteins. Performs the splicing and internal polyadenylation of the viral capsid-encoding mRNA precursor, which allows its maturation and expression. Transactivates the viral promoter. The sequence is that of Non-structural protein NP-1 (NP1) from Human bocavirus 2 (HBoV2).